Here is a 557-residue protein sequence, read N- to C-terminus: Potassium-transporting ATPase potassium-binding subunit (557 aa).

12 helical membrane passes run 5–25, 63–83, 132–152, 170–190, 253–273, 283–303, 329–349, 356–376, 379–399, 416–436, 484–504, and 526–546; these read GFLLIATFLLVLMVLARPLGS, LCAILGLNMLGLAVLFFMLLG, GLTVQNFLSAASGIAVIFALI, LLRITLWVLVPVALLIALFFI, FVQMLAIFLIPTALCFAFGEV, LLWAMSVIFVICVGVVMWAEV, VLVSSLFAVVTTAASCGAVIA, ALGGMVPMWLMQIGEVVFGGV, GLYGMMLFVLLAVFIAGLMIG, LTALAILVTPTLVLMGAALAM, LLAFCMFVGRFGVIIPVMAIA, and LFVGLLIGTVLLVGALTFIPA.

The protein belongs to the KdpA family. As to quaternary structure, the system is composed of three essential subunits: KdpA, KdpB and KdpC.

It is found in the cell inner membrane. Its function is as follows. Part of the high-affinity ATP-driven potassium transport (or Kdp) system, which catalyzes the hydrolysis of ATP coupled with the electrogenic transport of potassium into the cytoplasm. This subunit binds the periplasmic potassium ions and delivers the ions to the membrane domain of KdpB through an intramembrane tunnel. In Escherichia coli O17:K52:H18 (strain UMN026 / ExPEC), this protein is Potassium-transporting ATPase potassium-binding subunit.